The chain runs to 281 residues: Undecaprenyl-diphosphatase (281 aa).

7 helical membrane passes run 49–69 (SANT…AWIF), 92–112 (LHIF…DDFI), 116–136 (LFSV…MIAA), 152–172 (MTYK…WPGF), 196–216 (TFIM…ASNI), 224–244 (ILFY…SIRL), and 257–277 (FAIY…GFGI).

Belongs to the UppP family.

It localises to the cell membrane. It catalyses the reaction di-trans,octa-cis-undecaprenyl diphosphate + H2O = di-trans,octa-cis-undecaprenyl phosphate + phosphate + H(+). Its function is as follows. Catalyzes the dephosphorylation of undecaprenyl diphosphate (UPP). Confers resistance to bacitracin. This is Undecaprenyl-diphosphatase from Macrococcus caseolyticus (strain JCSC5402) (Macrococcoides caseolyticum).